The chain runs to 155 residues: RNA pyrophosphohydrolase (155 aa).

Residues 6–148 (GYRANVAIVL…KQEVYRKALT (143 aa)) form the Nudix hydrolase domain. Residues 38–59 (GGVATGETPLQAMYRELHEEIG) carry the Nudix box motif.

It belongs to the Nudix hydrolase family. RppH subfamily. A divalent metal cation serves as cofactor.

Functionally, accelerates the degradation of transcripts by removing pyrophosphate from the 5'-end of triphosphorylated RNA, leading to a more labile monophosphorylated state that can stimulate subsequent ribonuclease cleavage. The sequence is that of RNA pyrophosphohydrolase from Francisella tularensis subsp. tularensis (strain FSC 198).